A 1396-amino-acid chain; its full sequence is Melanoma inhibitory activity protein 2 (1396 aa).

An N-terminal signal peptide occupies residues 1-22 (MAEVSVQRILLLVVSLAKCLEG). Topologically, residues 23 to 604 (TKLLAHLKKC…YGFMSSALSP (582 aa)) are lumenal. The SH3 domain maps to 39–101 (TLISRVLALR…PRDAVEIEEV (63 aa)). The N-linked (GlcNAc...) asparagine glycan is linked to Asn59. Disordered stretches follow at residues 197 to 288 (EGAG…VPDE) and 331 to 361 (ESNPPLQDIPSSVPPDEEVPAPCREISTDKE). Residues 243–258 (SDTEPTQELALEEESD) show a composition bias toward acidic residues. N-linked (GlcNAc...) asparagine glycosylation occurs at Asn366. 2 disordered regions span residues 396-421 (DKGENEDGEVDNLKHPIGSDFDPEKE) and 525-557 (PMEEHEGVHFKPSSSKRNEDDSNSWADPEELSV). An intramembrane segment occupies 605–625 (IEILLESVVAALPEDMRADFN). Residues 626–628 (PSG) are Lumenal-facing. Residues 629–649 (FSLELAVCVLSVGLLAVVLFL) form a helical membrane-spanning segment. The Cytoplasmic segment spans residues 650 to 1396 (WRGFRSIRSR…AADPPETQEA (747 aa)). The mediates interaction with MIA3 stretch occupies residues 651 to 1243 (RGFRSIRSRF…RSYNMPSLDK (593 aa)). Coiled-coil stretches lie at residues 693 to 867 (YEGL…LVTS) and 914 to 1082 (AAKL…NRQK). A disordered region spans residues 1103-1396 (PNTAFGREHS…AADPPETQEA (294 aa)). Residues 1105 to 1396 (TAFGREHSPY…AADPPETQEA (292 aa)) form a proline-rich domain (PRD); probably mediates interaction with COPII coat subunits region. A compositionally biased stretch (low complexity) spans 1135 to 1146 (LLEGPLRLSPLL). Residues 1165-1179 (MNTERGESSYDRLSD) show a composition bias toward basic and acidic residues. The span at 1252 to 1269 (MESSGNGTKDNLGNSNVP) shows a compositional bias: polar residues. 2 stretches are compositionally biased toward pro residues: residues 1331–1342 (RDFPGPPLPPFP) and 1351–1368 (GFPPYLPPRAGFFPPPPH).

This sequence belongs to the MIA/OTOR family. In terms of assembly, interacts with MIA3. Interacts with the COPII coat subunits SEC23A, SEC23B and maybe SEC24C. Interacts with PREB; recruits PREB to endoplasmic reticulum exit sites. Interacts with APOB. Isoform 1 is expressed in liver (at protein level). Isoform 2 is highly expressed in liver and weakly in testis.

The protein localises to the endoplasmic reticulum membrane. Plays a role in the transport of cargos that are too large to fit into COPII-coated vesicles and require specific mechanisms to be incorporated into membrane-bound carriers and exported from the endoplasmic reticulum. Plays a role in the secretion of lipoproteins, pre-chylomicrons and pre-VLDLs, by participating in their export from the endoplasmic reticulum. Thereby, may play a role in cholesterol and triglyceride homeostasis. Required for collagen VII (COL7A1) secretion by loading COL7A1 into transport carriers and recruiting PREB/SEC12 at the endoplasmic reticulum exit sites. This is Melanoma inhibitory activity protein 2 from Mus musculus (Mouse).